A 490-amino-acid polypeptide reads, in one-letter code: GTPase Der (490 aa).

EngA-type G domains are found at residues Pro3–Leu166 and Ile203–Thr376. GTP is bound by residues Gly9–Ser16, Asp56–Ile60, Asn118–Asp121, Gly209–Ser216, Asp256–Val260, and Asn321–Asp324. Positions Arg377–Glu461 constitute a KH-like domain.

This sequence belongs to the TRAFAC class TrmE-Era-EngA-EngB-Septin-like GTPase superfamily. EngA (Der) GTPase family. As to quaternary structure, associates with the 50S ribosomal subunit.

In terms of biological role, GTPase that plays an essential role in the late steps of ribosome biogenesis. This is GTPase Der from Shigella flexneri serotype 5b (strain 8401).